The primary structure comprises 711 residues: Long-chain-fatty-acid--CoA ligase 4 (711 aa).

A helical; Signal-anchor for type III membrane protein membrane pass occupies residues 8–28; it reads LTIILLPVHLLITIYSALIFI. Residues 29 to 711 are Cytoplasmic-facing; it reads PWYFLTNAKK…KDIERMYGGK (683 aa). Ser447 is subject to Phosphoserine.

It belongs to the ATP-dependent AMP-binding enzyme family. It depends on Mg(2+) as a cofactor.

Its subcellular location is the mitochondrion outer membrane. It is found in the peroxisome membrane. It localises to the microsome membrane. The protein localises to the endoplasmic reticulum membrane. The protein resides in the cell membrane. The enzyme catalyses a long-chain fatty acid + ATP + CoA = a long-chain fatty acyl-CoA + AMP + diphosphate. The catalysed reaction is (5Z,8Z,11Z,14Z)-eicosatetraenoate + ATP + CoA = (5Z,8Z,11Z,14Z)-eicosatetraenoyl-CoA + AMP + diphosphate. It carries out the reaction hexadecanoate + ATP + CoA = hexadecanoyl-CoA + AMP + diphosphate. It catalyses the reaction (E)-hexadec-2-enoate + ATP + CoA = (2E)-hexadecenoyl-CoA + AMP + diphosphate. The enzyme catalyses 15-hydroxy-(5Z,8Z,11Z,13E)-eicosatetraenoate + ATP + CoA = 15-hydroxy-(5Z,8Z,11Z,13E)-eicosatetraenoyl-CoA + AMP + diphosphate. The catalysed reaction is 12-hydroxy-(5Z,8Z,10E,14Z)-eicosatetraenoate + ATP + CoA = 12-hydroxy-(5Z,8Z,10E,14Z)-eicosatetraenoyl-CoA + AMP + diphosphate. It carries out the reaction 5-hydroxy-(6E,8Z,11Z,14Z)-eicosatetraenoate + ATP + CoA = 5-hydroxy-(6E,8Z,11Z,14Z)-eicosatetraenoyl-CoA + AMP + diphosphate. It catalyses the reaction 5,6-epoxy-(8Z,11Z,14Z)-eicosatrienoate + ATP + CoA = 5,6-epoxy-(8Z,11Z,14Z)-eicosatrienoyl-CoA + AMP + diphosphate. The enzyme catalyses 14,15-epoxy-(5Z,8Z,11Z)-eicosatrienoate + ATP + CoA = 14,15-epoxy-(5Z,8Z,11Z)-eicosatrienoyl-CoA + AMP + diphosphate. The catalysed reaction is 11,12-epoxy-(5Z,8Z,14Z)-eicosatrienoate + ATP + CoA = 11,12-epoxy-(5Z,8Z,14Z)-eicosatrienoyl-CoA + AMP + diphosphate. It carries out the reaction 8,9-epoxy-(5Z,11Z,14Z)-eicosatrienoate + ATP + CoA = 8,9-epoxy-(5Z,11Z,14Z)-eicosatrienoyl-CoA + AMP + diphosphate. Its activity is regulated as follows. Both triacsin C and rosiglitazone inhibit arachidonoyl-CoA ligase activity. In terms of biological role, catalyzes the conversion of long-chain fatty acids to their active form acyl-CoA for both synthesis of cellular lipids, and degradation via beta-oxidation. Preferentially activates arachidonate and eicosapentaenoate as substrates. Preferentially activates 8,9-EET &gt; 14,15-EET &gt; 5,6-EET &gt; 11,12-EET. Modulates glucose-stimulated insulin secretion by regulating the levels of unesterified EETs. Modulates prostaglandin E2 secretion. The polypeptide is Long-chain-fatty-acid--CoA ligase 4 (ACSL4) (Homo sapiens (Human)).